Reading from the N-terminus, the 242-residue chain is uncharacterized protein (242 aa).

An S4 RNA-binding domain is found at 2–69 (YRLAKIISNA…KPRLWIYYKP (68 aa)). The active-site Nucleophile is aspartate 102.

This sequence belongs to the pseudouridine synthase RsuA family.

The catalysed reaction is a uridine in RNA = a pseudouridine in RNA. This is an uncharacterized protein from Rickettsia typhi (strain ATCC VR-144 / Wilmington).